Consider the following 668-residue polypeptide: Type II methyltransferase M.MwoI (668 aa).

Belongs to the N(4)/N(6)-methyltransferase family. N(4) subfamily.

It carries out the reaction a 2'-deoxycytidine in DNA + S-adenosyl-L-methionine = an N(4)-methyl-2'-deoxycytidine in DNA + S-adenosyl-L-homocysteine + H(+). A beta subtype methylase, recognizes the double-stranded DNA sequence 5'-GCNNNNNNNGC-3', methylates C-2 on both strands, and protects the DNA from cleavage by the MwoI endonuclease. This Methanothermobacter wolfeii (Methanobacterium wolfei) protein is Type II methyltransferase M.MwoI.